Here is a 507-residue protein sequence, read N- to C-terminus: Rhomboid protease GluP (507 aa).

5 consecutive transmembrane segments (helical) span residues 179 to 199 (FTYL…INGG), 229 to 249 (IVLH…WSVG), 261 to 281 (FLLI…VFSP), 283 to 303 (PSAG…YVAL), and 312 to 332 (TIGT…FAVS). The active-site Nucleophile is Ser288. The Charge relay system role is filled by His339. Transmembrane regions (helical) follow at residues 340-360 (IGGL…KAGA) and 365-385 (LLSA…GLHS). TPR repeat units lie at residues 424–457 (ADLL…EPKD) and 458–491 (HASY…KPKE).

This sequence belongs to the peptidase S54 family.

The protein resides in the cell membrane. It carries out the reaction Cleaves type-1 transmembrane domains using a catalytic dyad composed of serine and histidine that are contributed by different transmembrane domains.. Its activity is regulated as follows. Inhibited by dichloroisocoumarin (DCI) and N-p-tosyl-L-phenylalanine chloromethyl ketone (TPCK), but not by other serine protease inhibitors such as sulfonyl fluoride PMSF and 4-(2-aminoethyl)benzenesulfonyl fluoride (AEBSF). Rhomboid-type serine protease that catalyzes intramembrane proteolysis. Important for normal cell division and sporulation. May act as a glucose exporter. The polypeptide is Rhomboid protease GluP (gluP) (Bacillus subtilis (strain 168)).